A 78-amino-acid polypeptide reads, in one-letter code: Large ribosomal subunit protein bL28 (78 aa).

The segment at M1–A21 is disordered.

Belongs to the bacterial ribosomal protein bL28 family.

In Shewanella loihica (strain ATCC BAA-1088 / PV-4), this protein is Large ribosomal subunit protein bL28.